Consider the following 344-residue polypeptide: N-acetyl-gamma-glutamyl-phosphate reductase (344 aa).

Residue Cys149 is part of the active site.

The protein belongs to the NAGSA dehydrogenase family. Type 1 subfamily.

It is found in the cytoplasm. It carries out the reaction N-acetyl-L-glutamate 5-semialdehyde + phosphate + NADP(+) = N-acetyl-L-glutamyl 5-phosphate + NADPH + H(+). It participates in amino-acid biosynthesis; L-arginine biosynthesis; N(2)-acetyl-L-ornithine from L-glutamate: step 3/4. In terms of biological role, catalyzes the NADPH-dependent reduction of N-acetyl-5-glutamyl phosphate to yield N-acetyl-L-glutamate 5-semialdehyde. This is N-acetyl-gamma-glutamyl-phosphate reductase from Thermoanaerobacter pseudethanolicus (strain ATCC 33223 / 39E) (Clostridium thermohydrosulfuricum).